Here is a 142-residue protein sequence, read N- to C-terminus: Large ribosomal subunit protein bL17 (142 aa).

It belongs to the bacterial ribosomal protein bL17 family. As to quaternary structure, part of the 50S ribosomal subunit. Contacts protein L32.

The polypeptide is Large ribosomal subunit protein bL17 (Chlamydia felis (strain Fe/C-56) (Chlamydophila felis)).